Reading from the N-terminus, the 148-residue chain is Snaclec 27 (148 aa).

Positions tryptophan 1–alanine 23 are cleaved as a signal peptide. 3 cysteine pairs are disulfide-bonded: cysteine 27–cysteine 38, cysteine 55–cysteine 144, and cysteine 121–cysteine 136. The 112-residue stretch at histidine 34–lysine 145 folds into the C-type lectin domain.

This sequence belongs to the snaclec family. In terms of assembly, heterodimer; disulfide-linked. In terms of tissue distribution, expressed by the venom gland.

The protein localises to the secreted. Its function is as follows. Interferes with one step of hemostasis (modulation of platelet aggregation, or coagulation cascade, for example). This Echis ocellatus (Ocellated saw-scaled viper) protein is Snaclec 27.